A 505-amino-acid polypeptide reads, in one-letter code: L-carnitine/gamma-butyrobetaine antiporter (505 aa).

The next 12 membrane-spanning stretches (helical) occupy residues 10–30 (IEPK…WLTV), 51–71 (WGWA…WLVF), 92–112 (IFMM…SIEI), 143–163 (GPLP…FFFV), 195–215 (FYLV…TPLV), 231–251 (LDAI…ACGL), 263–283 (SYLS…SFIM), 316–336 (WTVF…IFLA), 347–367 (LCFG…TVLG), 403–423 (LSTA…VTLI), 446–466 (LLVR…LLAL), and 475–495 (AIIA…LSFI).

Belongs to the BCCT transporter (TC 2.A.15) family. CaiT subfamily. Homotrimer.

It localises to the cell inner membrane. It catalyses the reaction 4-(trimethylamino)butanoate(in) + (R)-carnitine(out) = 4-(trimethylamino)butanoate(out) + (R)-carnitine(in). Its pathway is amine and polyamine metabolism; carnitine metabolism. Catalyzes the exchange of L-carnitine for gamma-butyrobetaine. This Salmonella paratyphi A (strain ATCC 9150 / SARB42) protein is L-carnitine/gamma-butyrobetaine antiporter.